A 162-amino-acid chain; its full sequence is Endoribonuclease YbeY (162 aa).

The Zn(2+) site is built by histidine 117, histidine 121, and histidine 127.

It belongs to the endoribonuclease YbeY family. It depends on Zn(2+) as a cofactor.

It is found in the cytoplasm. Its function is as follows. Single strand-specific metallo-endoribonuclease involved in late-stage 70S ribosome quality control and in maturation of the 3' terminus of the 16S rRNA. The protein is Endoribonuclease YbeY of Francisella tularensis subsp. novicida (strain U112).